Consider the following 370-residue polypeptide: Forkhead box protein J1.2 (370 aa).

The segment at 45 to 74 is disordered; sequence ANSRPPVPRVSQGPCSPPAGDTASCQAPRT. A DNA-binding region (fork-head) is located at residues 108–202; that stretch reads KPPYSYATLI…VNGVLKRRRM (95 aa). Positions 227–246 are disordered; it reads PGSHHMQHISGGHRQSRRYE.

It belongs to the FOXJ1 family.

Its subcellular location is the nucleus. Functionally, key transcription factor required for motile ciliogenesis. Activates genes essential for motile cilia formation and function. This Xenopus laevis (African clawed frog) protein is Forkhead box protein J1.2.